The primary structure comprises 646 residues: Centrosomal protein of 72 kDa (646 aa).

LRR repeat units lie at residues 28–49 (ELRS…GNSL), 54–75 (ALKS…QYLV), and 76–97 (SLES…FRLH). Residues 110–149 (NPVVKNESDYRLFVVHMLPKLRQLDDRPVRESERKASQLH) form the LRRCT domain. A phosphoserine mark is found at serine 117 and serine 236. Disordered stretches follow at residues 300–342 (SVDV…RFQV) and 357–399 (GPSS…SDPR). Positions 307–319 (ASSAQKSSLSSQK) are enriched in low complexity. Residue serine 380 is modified to Phosphoserine. The segment covering 383–392 (EALEAEERTS) has biased composition (basic and acidic residues). Phosphoserine is present on serine 402. Positions 476 to 622 (LSLENKTLQS…RAEVEQMRWS (147 aa)) form a coiled coil.

This sequence belongs to the CEP72 family. Interacts with KIZ, PCM1 and CDK5RAP2.

The protein localises to the cytoplasm. It localises to the cytoskeleton. Its subcellular location is the microtubule organizing center. The protein resides in the centrosome. It is found in the centriolar satellite. In terms of biological role, involved in the recruitment of key centrosomal proteins to the centrosome. Provides centrosomal microtubule-nucleation activity on the gamma-tubulin ring complexes (gamma-TuRCs) and has critical roles in forming a focused bipolar spindle, which is needed for proper tension generation between sister chromatids. Required for localization of KIZ, AKAP9 and gamma-tubulin ring complexes (gamma-TuRCs). Involved in centriole duplication. Required for CDK5RAP22, CEP152, WDR62 and CEP63 centrosomal localization and promotes the centrosomal localization of CDK2. The sequence is that of Centrosomal protein of 72 kDa (Cep72) from Mus musculus (Mouse).